The primary structure comprises 143 residues: Nucleoside diphosphate kinase (143 aa).

The ATP site is built by K11, F59, R87, T93, R104, and N114. The active-site Pros-phosphohistidine intermediate is the H117.

It belongs to the NDK family. As to quaternary structure, homotetramer. The cofactor is Mg(2+).

The protein localises to the cytoplasm. It catalyses the reaction a 2'-deoxyribonucleoside 5'-diphosphate + ATP = a 2'-deoxyribonucleoside 5'-triphosphate + ADP. It carries out the reaction a ribonucleoside 5'-diphosphate + ATP = a ribonucleoside 5'-triphosphate + ADP. Major role in the synthesis of nucleoside triphosphates other than ATP. The ATP gamma phosphate is transferred to the NDP beta phosphate via a ping-pong mechanism, using a phosphorylated active-site intermediate. The polypeptide is Nucleoside diphosphate kinase (Stutzerimonas stutzeri (strain A1501) (Pseudomonas stutzeri)).